The sequence spans 268 residues: Small ribosomal subunit protein uS2 (268 aa).

The protein belongs to the universal ribosomal protein uS2 family.

This chain is Small ribosomal subunit protein uS2, found in Coprothermobacter proteolyticus (strain ATCC 35245 / DSM 5265 / OCM 4 / BT).